Consider the following 332-residue polypeptide: Holliday junction branch migration complex subunit RuvB (332 aa).

Residues methionine 1–tyrosine 182 form a large ATPase domain (RuvB-L) region. ATP contacts are provided by residues leucine 21, arginine 22, glycine 63, lysine 66, threonine 67, threonine 68, glutamate 129–phenylalanine 131, arginine 172, tyrosine 182, and arginine 219. A Mg(2+)-binding site is contributed by threonine 67. A small ATPAse domain (RuvB-S) region spans residues aspartate 183 to serine 253. The head domain (RuvB-H) stretch occupies residues glutamate 256–arginine 332. DNA-binding residues include arginine 311 and arginine 316.

The protein belongs to the RuvB family. In terms of assembly, homohexamer. Forms an RuvA(8)-RuvB(12)-Holliday junction (HJ) complex. HJ DNA is sandwiched between 2 RuvA tetramers; dsDNA enters through RuvA and exits via RuvB. An RuvB hexamer assembles on each DNA strand where it exits the tetramer. Each RuvB hexamer is contacted by two RuvA subunits (via domain III) on 2 adjacent RuvB subunits; this complex drives branch migration. In the full resolvosome a probable DNA-RuvA(4)-RuvB(12)-RuvC(2) complex forms which resolves the HJ.

It localises to the cytoplasm. The enzyme catalyses ATP + H2O = ADP + phosphate + H(+). In terms of biological role, the RuvA-RuvB-RuvC complex processes Holliday junction (HJ) DNA during genetic recombination and DNA repair, while the RuvA-RuvB complex plays an important role in the rescue of blocked DNA replication forks via replication fork reversal (RFR). RuvA specifically binds to HJ cruciform DNA, conferring on it an open structure. The RuvB hexamer acts as an ATP-dependent pump, pulling dsDNA into and through the RuvAB complex. RuvB forms 2 homohexamers on either side of HJ DNA bound by 1 or 2 RuvA tetramers; 4 subunits per hexamer contact DNA at a time. Coordinated motions by a converter formed by DNA-disengaged RuvB subunits stimulates ATP hydrolysis and nucleotide exchange. Immobilization of the converter enables RuvB to convert the ATP-contained energy into a lever motion, pulling 2 nucleotides of DNA out of the RuvA tetramer per ATP hydrolyzed, thus driving DNA branch migration. The RuvB motors rotate together with the DNA substrate, which together with the progressing nucleotide cycle form the mechanistic basis for DNA recombination by continuous HJ branch migration. Branch migration allows RuvC to scan DNA until it finds its consensus sequence, where it cleaves and resolves cruciform DNA. The sequence is that of Holliday junction branch migration complex subunit RuvB from Protochlamydia amoebophila (strain UWE25).